Here is a 338-residue protein sequence, read N- to C-terminus: Ketol-acid reductoisomerase (NADP(+)) (338 aa).

Residues 1–181 (MKVYYDKDCD…GGGRTGIIET (181 aa)) form the KARI N-terminal Rossmann domain. Residues 24–27 (YGSQ), Arg47, Ser50, Thr52, and 82–85 (DEFQ) contribute to the NADP(+) site. Residue His107 is part of the active site. Gly133 is a binding site for NADP(+). The KARI C-terminal knotted domain occupies 182–327 (TFKDETETDL…EQLRAMMPWI (146 aa)). Mg(2+) is bound by residues Asp190, Glu194, Glu226, and Glu230. A substrate-binding site is contributed by Ser251.

The protein belongs to the ketol-acid reductoisomerase family. Requires Mg(2+) as cofactor.

The catalysed reaction is (2R)-2,3-dihydroxy-3-methylbutanoate + NADP(+) = (2S)-2-acetolactate + NADPH + H(+). The enzyme catalyses (2R,3R)-2,3-dihydroxy-3-methylpentanoate + NADP(+) = (S)-2-ethyl-2-hydroxy-3-oxobutanoate + NADPH + H(+). It functions in the pathway amino-acid biosynthesis; L-isoleucine biosynthesis; L-isoleucine from 2-oxobutanoate: step 2/4. Its pathway is amino-acid biosynthesis; L-valine biosynthesis; L-valine from pyruvate: step 2/4. Functionally, involved in the biosynthesis of branched-chain amino acids (BCAA). Catalyzes an alkyl-migration followed by a ketol-acid reduction of (S)-2-acetolactate (S2AL) to yield (R)-2,3-dihydroxy-isovalerate. In the isomerase reaction, S2AL is rearranged via a Mg-dependent methyl migration to produce 3-hydroxy-3-methyl-2-ketobutyrate (HMKB). In the reductase reaction, this 2-ketoacid undergoes a metal-dependent reduction by NADPH to yield (R)-2,3-dihydroxy-isovalerate. In Ectopseudomonas mendocina (strain ymp) (Pseudomonas mendocina), this protein is Ketol-acid reductoisomerase (NADP(+)).